The following is a 149-amino-acid chain: Macrodomain Ter protein (149 aa).

The protein belongs to the MatP family. As to quaternary structure, homodimer.

Its subcellular location is the cytoplasm. Functionally, required for spatial organization of the terminus region of the chromosome (Ter macrodomain) during the cell cycle. Prevents early segregation of duplicated Ter macrodomains during cell division. Binds specifically to matS, which is a 13 bp signature motif repeated within the Ter macrodomain. In Vibrio parahaemolyticus serotype O3:K6 (strain RIMD 2210633), this protein is Macrodomain Ter protein.